Consider the following 156-residue polypeptide: Ribonuclease pancreatic (156 aa).

The N-terminal stretch at 1–28 (MALEKSLALLPLLVLVLLVLGWVQPSLG) is a signal peptide. Residues 33–43 (AKKFQRQHMDS) show a composition bias toward basic and acidic residues. The tract at residues 33 to 52 (AKKFQRQHMDSDGSPSSNPT) is disordered. Substrate is bound by residues Lys-35 and Arg-38. His-40 functions as the Proton acceptor in the catalytic mechanism. Cystine bridges form between Cys-54-Cys-112, Cys-68-Cys-123, Cys-86-Cys-138, and Cys-93-Cys-100. N-linked (GlcNAc...) asparagine glycosylation is present at Asn-62. 69-73 (KPVNT) serves as a coordination point for substrate. Residue Asn-90 is glycosylated (N-linked (GlcNAc...) asparagine). Residues Lys-94 and Arg-113 each coordinate substrate. N-linked (GlcNAc...) asparagine glycosylation is present at Asn-116. Catalysis depends on His-147, which acts as the Proton donor.

Belongs to the pancreatic ribonuclease family. In terms of assembly, monomer. Interacts with and forms tight 1:1 complexes with RNH1. Dimerization of two such complexes may occur. Interaction with RNH1 inhibits this protein.

It localises to the secreted. It carries out the reaction an [RNA] containing cytidine + H2O = an [RNA]-3'-cytidine-3'-phosphate + a 5'-hydroxy-ribonucleotide-3'-[RNA].. The enzyme catalyses an [RNA] containing uridine + H2O = an [RNA]-3'-uridine-3'-phosphate + a 5'-hydroxy-ribonucleotide-3'-[RNA].. In terms of biological role, endonuclease that catalyzes the cleavage of RNA on the 3' side of pyrimidine nucleotides. Acts on single-stranded and double-stranded RNA. The protein is Ribonuclease pancreatic (RNASE1) of Ateles geoffroyi (Black-handed spider monkey).